A 564-amino-acid polypeptide reads, in one-letter code: NAD-dependent malic enzyme (564 aa).

Tyr104 functions as the Proton donor in the catalytic mechanism. Arg157 contacts NAD(+). The active-site Proton acceptor is the Lys175. Residues Glu246, Asp247, and Asp270 each coordinate a divalent metal cation. NAD(+) is bound by residues Asp270 and Asn417.

This sequence belongs to the malic enzymes family. As to quaternary structure, homotetramer. The cofactor is Mg(2+). Requires Mn(2+) as cofactor.

The enzyme catalyses (S)-malate + NAD(+) = pyruvate + CO2 + NADH. It carries out the reaction oxaloacetate + H(+) = pyruvate + CO2. The protein is NAD-dependent malic enzyme of Aeromonas hydrophila subsp. hydrophila (strain ATCC 7966 / DSM 30187 / BCRC 13018 / CCUG 14551 / JCM 1027 / KCTC 2358 / NCIMB 9240 / NCTC 8049).